The following is a 1393-amino-acid chain: MFGEGSRDNATLSKEGLFDKLEIGIASDITIRDKWSCGEIKKPETINYRTFKPEKGGLFCEKIFGPTKDWECCCGKYKKIKHKGIVCDRCGVEVTLSKVRRERMAHIELAVPIVHIWFFKTTPSRIGNVLGMTASDLERIIYYEEYVVIDPGKTDLNKKQLLNDAQYREVVEKWGKDAFVAKMGGEAIYDLLKSEDLQSLLKELKDRLRKTKSQQARMKLAKRLKIIEGFVSSSNHPEWMVLKSVPVVPPDLRPLVPLDGGRFATSDLNDLYRRVINRNNRLKAILRLKTPEVIVRNEKRMLQEAVDALFDNGRHGHPVMGAGNRPLKSLSEMLKGKNGRFRQNLLGKRVDYSGRSVIIVGPELKFNQCGLPKEMALELFEPFIIKRLKDQGSVYTIRSAKKMIQRGAPEVWDVLEEIIKGHPVLLNRAPTLHRLGIQAFEPVLIEGKAIRVHPLVCAAFNADFDGDQMAVHVPLSIEAQLEAKVLMMAPDNIFLPSSGKPVATPSKDMTLGIYYLMADPTYFPEDHGGKIKIFRDVTEVLRALYTGGFLDERINNRCDETGRGIHIHEKIKVRIDGQIIETTPGRVLFNRIVPKELGFQNYSMPSKRISELILQCYKKVGLEATVRFLDDLKDLGFIQATKAAISMGLKDVRIPEIKSEILKEAYDKVAVVKKQYDDGIITDGERHSKTISIWTEVSELLSDALYVEISKQAKSKHNPLFLMIDSGARGNKSQLKQLGALRGLMAKPNGAIIESPITSNFREGLTVLEYSISSHGARKGLADTALKTADSGYLTRRLVDVAQDVIITEKDCGTLNHIEISAIRQGSEELLPLKDRIYGRTVSEDIYQPGDKSKLLAKNGDVVTSAQAELIDDAGIESIKIRSTLTCESRRGVCAKCYGLNLANGRLIGLGEAVGIIAAQSIGEPGTQLTMRTFHLGGIAATSSTPEIVTDNDGILVYMDLRVVVGQDGNHLVLNKKGAIHVVRDEGRSLEEYKKLLSTKSIESLETYPVELGVKILVGDGEKVSSGQRIAEVELHNIPIICDKPGFVKYEDLVEGISTEKVVNKNTGLVELIVKQHRGELHPQIAIYSDAGLTELVGTYAIPSGAIISVEENQKVDPGMLLARLPRGAIKTKDITGGLPRVAELVEARKPEDAADIAKIDGVVDFKGIQKNKRILVVRDEITGMEEEHLIPLTKHLIVQRGDNVMKGQQLTDGLVVPHEILEICGVRELQKYLVNEVQEVYRLQGVDINDKHIEIIVRQMLQKVRITDPGDTTLLFGEEVNKKEFYEENRRTEEDGGKPAQAVPVLLGITKASLGTESFISAASFQDTTRVLTDAACSSKTDYLLGFKENVIMGHMIPGGTGFDTHKRIKQYLEKEQEDLVFDFESESECAC.

Zn(2+) is bound by residues Cys-72, Cys-74, Cys-87, and Cys-90. Asp-463, Asp-465, and Asp-467 together coordinate Mg(2+). Positions 812, 887, 894, and 897 each coordinate Zn(2+).

This sequence belongs to the RNA polymerase beta' chain family. As to quaternary structure, the RNAP catalytic core consists of 2 alpha, 1 beta, 1 beta' and 1 omega subunit. When a sigma factor is associated with the core the holoenzyme is formed, which can initiate transcription. The cofactor is Mg(2+). Zn(2+) is required as a cofactor.

The enzyme catalyses RNA(n) + a ribonucleoside 5'-triphosphate = RNA(n+1) + diphosphate. Functionally, DNA-dependent RNA polymerase catalyzes the transcription of DNA into RNA using the four ribonucleoside triphosphates as substrates. In Chlamydia caviae (strain ATCC VR-813 / DSM 19441 / 03DC25 / GPIC) (Chlamydophila caviae), this protein is DNA-directed RNA polymerase subunit beta'.